The following is a 498-amino-acid chain: GTPase Der (498 aa).

2 EngA-type G domains span residues 3-167 and 210-383; these read PVVA…FDDL and IKLA…KSAT. GTP contacts are provided by residues 9–16, 57–61, 119–122, 216–223, 263–267, and 328–331; these read GRPNVGKS, DTGGI, NKID, DTAGV, and NKWD. A KH-like domain is found at 384–468; that stretch reads TRVGTSVLTR…PIRINFQNSD (85 aa).

The protein belongs to the TRAFAC class TrmE-Era-EngA-EngB-Septin-like GTPase superfamily. EngA (Der) GTPase family. In terms of assembly, associates with the 50S ribosomal subunit.

GTPase that plays an essential role in the late steps of ribosome biogenesis. The protein is GTPase Der of Vibrio campbellii (strain ATCC BAA-1116).